Here is a 433-residue protein sequence, read N- to C-terminus: N-lysine methyltransferase SMYD2 (433 aa).

The SET domain occupies 7–241 (GGLERFCSAG…PGDEVFTSYI (235 aa)). 17-19 (KGR) contacts S-adenosyl-L-methionine. Zn(2+) is bound by residues C52, C55, C65, C68, C74, C78, H86, and C90. The MYND-type zinc-finger motif lies at 52–90 (CECCFARKEGLSKCGRCKQAFYCDVECQKEDWPLHKLEC). S-adenosyl-L-methionine-binding positions include H137, 206-207 (NH), and 258-260 (YFF). The residue at position 283 (S283) is a Phosphoserine.

The protein belongs to the class V-like SAM-binding methyltransferase superfamily. In terms of assembly, interacts (via MYND-type zinc finger) with EPB41L3. Interacts (via SET domain) with p53/TP53. Interacts with RB1 and HSP90AA1. Interacts with RNA polymerase II and HELZ. Interacts with SIN3A and HDAC1. Highly expressed in heart, skeletal muscle and brain tissue. During cardiac development, it is differentially expressed with highest expression in the neonatal heart while very low expression is detected at 12.5 dpc and adult. Specifically expressed in cardiomyocytes (at protein level).

It is found in the cytoplasm. The protein resides in the cytosol. Its subcellular location is the nucleus. The enzyme catalyses L-lysyl(4)-[histone H3] + 3 S-adenosyl-L-methionine = N(6),N(6),N(6)-trimethyl-L-lysyl(4)-[histone H3] + 3 S-adenosyl-L-homocysteine + 3 H(+). The catalysed reaction is L-lysyl-[protein] + S-adenosyl-L-methionine = N(6)-methyl-L-lysyl-[protein] + S-adenosyl-L-homocysteine + H(+). Functionally, protein-lysine N-methyltransferase that methylates both histones and non-histone proteins, including p53/TP53 and RB1. Specifically trimethylates histone H3 'Lys-4' (H3K4me3) in vivo. The activity requires interaction with HSP90alpha. Shows even higher methyltransferase activity on p53/TP53. Monomethylates 'Lys-370' of p53/TP53, leading to decreased DNA-binding activity and subsequent transcriptional regulation activity of p53/TP53. Monomethylates RB1 at 'Lys-860'. In Mus musculus (Mouse), this protein is N-lysine methyltransferase SMYD2 (Smyd2).